We begin with the raw amino-acid sequence, 66 residues long: Large ribosomal subunit protein uL29 (66 aa).

The protein belongs to the universal ribosomal protein uL29 family.

This chain is Large ribosomal subunit protein uL29, found in Rhizobium rhizogenes (strain K84 / ATCC BAA-868) (Agrobacterium radiobacter).